A 738-amino-acid chain; its full sequence is Ethylene receptor (738 aa).

3 consecutive transmembrane segments (helical) span residues 22–42, 53–73, and 91–111; these read ISDF…VYFV, VLVQ…INLW, and VLTA…IPDL. Cu cation-binding residues include C64 and H68. In terms of domain architecture, GAF spans 157-305; that stretch reads DRHTILKTTL…VVADQVAVAL (149 aa). The region spanning 348-585 is the Histidine kinase domain; it reads VMNHEMRTPM…TAIFIVKLGI (238 aa). H351 bears the Phosphohistidine; by autocatalysis mark. One can recognise a Response regulatory domain in the interval 613 to 730; sequence KVLIMDDNGF…KMRSVLSELL (118 aa). At D661 the chain carries 4-aspartylphosphate.

This sequence belongs to the ethylene receptor family. In terms of assembly, homodimer; disulfide-linked. It depends on Cu cation as a cofactor. Activation probably requires a transfer of a phosphate group between a His in the transmitter domain and an Asp of the receiver domain.

The protein resides in the endoplasmic reticulum membrane. It carries out the reaction ATP + protein L-histidine = ADP + protein N-phospho-L-histidine.. In terms of biological role, may act early in the ethylene signal transduction pathway, possibly as an ethylene receptor, or as a regulator of the pathway. The chain is Ethylene receptor (ETR1) from Nicotiana tabacum (Common tobacco).